A 434-amino-acid polypeptide reads, in one-letter code: Homogentisate 1,2-dioxygenase (434 aa).

Histidine 289 serves as the catalytic Proton acceptor. The Fe cation site is built by histidine 332 and glutamate 338. Positions 347 and 368 each coordinate homogentisate. Fe cation is bound at residue histidine 368.

It belongs to the homogentisate dioxygenase family. In terms of assembly, hexamer; dimer of trimers. The cofactor is Fe cation.

The enzyme catalyses homogentisate + O2 = 4-maleylacetoacetate + H(+). It participates in amino-acid degradation; L-phenylalanine degradation; acetoacetate and fumarate from L-phenylalanine: step 4/6. Functionally, involved in the catabolism of homogentisate (2,5-dihydroxyphenylacetate or 2,5-OH-PhAc), a central intermediate in the degradation of phenylalanine and tyrosine. Catalyzes the oxidative ring cleavage of the aromatic ring of homogentisate to yield maleylacetoacetate. This chain is Homogentisate 1,2-dioxygenase, found in Pseudomonas fluorescens (strain ATCC BAA-477 / NRRL B-23932 / Pf-5).